Here is a 141-residue protein sequence, read N- to C-terminus: 3-hydroxyacyl-[acyl-carrier-protein] dehydratase FabZ (141 aa).

The active site involves His-49.

Belongs to the thioester dehydratase family. FabZ subfamily.

It is found in the cytoplasm. It carries out the reaction a (3R)-hydroxyacyl-[ACP] = a (2E)-enoyl-[ACP] + H2O. Its function is as follows. Involved in unsaturated fatty acids biosynthesis. Catalyzes the dehydration of short chain beta-hydroxyacyl-ACPs and long chain saturated and unsaturated beta-hydroxyacyl-ACPs. The polypeptide is 3-hydroxyacyl-[acyl-carrier-protein] dehydratase FabZ (Fusobacterium nucleatum subsp. nucleatum (strain ATCC 25586 / DSM 15643 / BCRC 10681 / CIP 101130 / JCM 8532 / KCTC 2640 / LMG 13131 / VPI 4355)).